Reading from the N-terminus, the 126-residue chain is MRVPVGHTQQLTEGQPAVEVINDDYFLVVVPVPPFTLHLVEFTSGVVSCPTALPATGRARDDDDFRFEVTGLLTNQQLQVAQATPIFDVYLTEVSRDLGHCSSGFHRGNSLAEIAPVSLRRNAQGK.

This is an uncharacterized protein from Columba livia (Rock dove).